Here is a 490-residue protein sequence, read N- to C-terminus: Glutamyl-tRNA(Gln) amidotransferase subunit A (490 aa).

Active-site charge relay system residues include Lys-76 and Ser-151. Ser-175 functions as the Acyl-ester intermediate in the catalytic mechanism.

Belongs to the amidase family. GatA subfamily. Heterotrimer of A, B and C subunits.

The catalysed reaction is L-glutamyl-tRNA(Gln) + L-glutamine + ATP + H2O = L-glutaminyl-tRNA(Gln) + L-glutamate + ADP + phosphate + H(+). In terms of biological role, allows the formation of correctly charged Gln-tRNA(Gln) through the transamidation of misacylated Glu-tRNA(Gln) in organisms which lack glutaminyl-tRNA synthetase. The reaction takes place in the presence of glutamine and ATP through an activated gamma-phospho-Glu-tRNA(Gln). The polypeptide is Glutamyl-tRNA(Gln) amidotransferase subunit A (Aromatoleum aromaticum (strain DSM 19018 / LMG 30748 / EbN1) (Azoarcus sp. (strain EbN1))).